A 415-amino-acid chain; its full sequence is Probable RAD2-like endonuclease 369L (415 aa).

The interval 1–114 (MGIKNLTKFI…EDVKKKTLSL (114 aa)) is N-domain. 7 residues coordinate Mg(2+): Asp34, Glu86, Glu198, Glu200, Asp219, Asp221, and Asp277. The interval 163-297 (VKQRHRYDIR…VKSYELIKVQ (135 aa)) is I-domain.

This sequence belongs to the XPG/RAD2 endonuclease family. Requires Mg(2+) as cofactor.

It is found in the host nucleus. In terms of biological role, probable endonuclease. This is Probable RAD2-like endonuclease 369L from Acheta domesticus (House cricket).